We begin with the raw amino-acid sequence, 99 residues long: Aspartyl/glutamyl-tRNA(Asn/Gln) amidotransferase subunit C (99 aa).

The protein belongs to the GatC family. As to quaternary structure, heterotrimer of A, B and C subunits.

The enzyme catalyses L-glutamyl-tRNA(Gln) + L-glutamine + ATP + H2O = L-glutaminyl-tRNA(Gln) + L-glutamate + ADP + phosphate + H(+). It catalyses the reaction L-aspartyl-tRNA(Asn) + L-glutamine + ATP + H2O = L-asparaginyl-tRNA(Asn) + L-glutamate + ADP + phosphate + 2 H(+). In terms of biological role, allows the formation of correctly charged Asn-tRNA(Asn) or Gln-tRNA(Gln) through the transamidation of misacylated Asp-tRNA(Asn) or Glu-tRNA(Gln) in organisms which lack either or both of asparaginyl-tRNA or glutaminyl-tRNA synthetases. The reaction takes place in the presence of glutamine and ATP through an activated phospho-Asp-tRNA(Asn) or phospho-Glu-tRNA(Gln). The protein is Aspartyl/glutamyl-tRNA(Asn/Gln) amidotransferase subunit C of Burkholderia thailandensis (strain ATCC 700388 / DSM 13276 / CCUG 48851 / CIP 106301 / E264).